We begin with the raw amino-acid sequence, 235 residues long: Orotidine 5'-phosphate decarboxylase (235 aa).

Substrate contacts are provided by residues D10, K33, 60 to 69 (DLKMSDIPNT), T123, R185, Q194, G214, and R215. K62 (proton donor) is an active-site residue.

It belongs to the OMP decarboxylase family. Type 1 subfamily. Homodimer.

The enzyme catalyses orotidine 5'-phosphate + H(+) = UMP + CO2. Its pathway is pyrimidine metabolism; UMP biosynthesis via de novo pathway; UMP from orotate: step 2/2. Catalyzes the decarboxylation of orotidine 5'-monophosphate (OMP) to uridine 5'-monophosphate (UMP). This Lactobacillus gasseri (strain ATCC 33323 / DSM 20243 / BCRC 14619 / CIP 102991 / JCM 1131 / KCTC 3163 / NCIMB 11718 / NCTC 13722 / AM63) protein is Orotidine 5'-phosphate decarboxylase.